Reading from the N-terminus, the 207-residue chain is Uridine kinase (207 aa).

11-18 (GGSGSGKT) is an ATP binding site.

This sequence belongs to the uridine kinase family.

The protein localises to the cytoplasm. It carries out the reaction uridine + ATP = UMP + ADP + H(+). It catalyses the reaction cytidine + ATP = CMP + ADP + H(+). It participates in pyrimidine metabolism; CTP biosynthesis via salvage pathway; CTP from cytidine: step 1/3. It functions in the pathway pyrimidine metabolism; UMP biosynthesis via salvage pathway; UMP from uridine: step 1/1. The protein is Uridine kinase of Staphylococcus haemolyticus (strain JCSC1435).